The sequence spans 122 residues: S-adenosylmethionine decarboxylase proenzyme (122 aa).

The active-site Schiff-base intermediate with substrate; via pyruvic acid is serine 63. Serine 63 carries the pyruvic acid (Ser); by autocatalysis modification. Histidine 68 acts as the Proton acceptor; for processing activity in catalysis. Catalysis depends on cysteine 83, which acts as the Proton donor; for catalytic activity.

This sequence belongs to the prokaryotic AdoMetDC family. Type 1 subfamily. Heterotetramer of two alpha and two beta chains arranged as a dimer of alpha/beta heterodimers. It depends on pyruvate as a cofactor. Post-translationally, is synthesized initially as an inactive proenzyme. Formation of the active enzyme involves a self-maturation process in which the active site pyruvoyl group is generated from an internal serine residue via an autocatalytic post-translational modification. Two non-identical subunits are generated from the proenzyme in this reaction, and the pyruvate is formed at the N-terminus of the alpha chain, which is derived from the carboxyl end of the proenzyme. The post-translation cleavage follows an unusual pathway, termed non-hydrolytic serinolysis, in which the side chain hydroxyl group of the serine supplies its oxygen atom to form the C-terminus of the beta chain, while the remainder of the serine residue undergoes an oxidative deamination to produce ammonia and the pyruvoyl group blocking the N-terminus of the alpha chain.

The enzyme catalyses S-adenosyl-L-methionine + H(+) = S-adenosyl 3-(methylsulfanyl)propylamine + CO2. It functions in the pathway amine and polyamine biosynthesis; S-adenosylmethioninamine biosynthesis; S-adenosylmethioninamine from S-adenosyl-L-methionine: step 1/1. Its function is as follows. Catalyzes the decarboxylation of S-adenosylmethionine to S-adenosylmethioninamine (dcAdoMet), the propylamine donor required for the synthesis of the polyamines spermine and spermidine from the diamine putrescine. This Methanococcus maripaludis (strain C7 / ATCC BAA-1331) protein is S-adenosylmethionine decarboxylase proenzyme.